The following is a 387-amino-acid chain: MGILGLSKLIADLAPQAIRESEIKNFFGRKVAIDASMCLYQFLIAVRSEGAQLATVNGDPTSHLMGMFYRTIRLLDNGIKPVYVFDGKPPDLKSGELAKRAERREEAEKALKAATDAGDDAGIEKFNRRLVRVTKEHANEAKELLTLMGVPYVDAPCEAEAQCAALVKAGKVYATATEDMDALTFGSTKLLRYLTYSEARKMPVKEFSYEKLLEGLSINSREFIDLCILLGCDYCESIKGIGPKRAIELINNYRDIETILDNLDSSKYTVPENWNYKVARELFIEPEVANADNIDLKWVEPDEEGLVKFLCGDRQFSEERVRNGAKKLMKSKQAQTQVRLDSFFKTLPSTPNATNAAKRKAEEAKKSANNKKAKTSGGGGGRGRRPK.

The segment at 1–104 (MGILGLSKLI…GELAKRAERR (104 aa)) is N-domain. Asp34 serves as a coordination point for Mg(2+). Positions 47 and 70 each coordinate DNA. Residues Asp86, Glu158, Glu160, Asp179, and Asp181 each contribute to the Mg(2+) site. An I-domain region spans residues 122–253 (GIEKFNRRLV…KRAIELINNY (132 aa)). Glu158 is a DNA binding site. Residues Gly231 and Asp233 each contribute to the DNA site. Asp233 lines the Mg(2+) pocket. An interaction with PCNA region spans residues 336–344 (TQVRLDSFF). The segment at 345 to 387 (KTLPSTPNATNAAKRKAEEAKKSANNKKAKTSGGGGGRGRRPK) is disordered.

It belongs to the XPG/RAD2 endonuclease family. FEN1 subfamily. Interacts with PCNA. Three molecules of FEN1 bind to one PCNA trimer with each molecule binding to one PCNA monomer. PCNA stimulates the nuclease activity without altering cleavage specificity. It depends on Mg(2+) as a cofactor. Phosphorylated. Phosphorylation upon DNA damage induces relocalization to the nuclear plasma.

It is found in the nucleus. It localises to the nucleolus. The protein resides in the nucleoplasm. Its subcellular location is the mitochondrion. Functionally, structure-specific nuclease with 5'-flap endonuclease and 5'-3' exonuclease activities involved in DNA replication and repair. During DNA replication, cleaves the 5'-overhanging flap structure that is generated by displacement synthesis when DNA polymerase encounters the 5'-end of a downstream Okazaki fragment. It enters the flap from the 5'-end and then tracks to cleave the flap base, leaving a nick for ligation. Also involved in the long patch base excision repair (LP-BER) pathway, by cleaving within the apurinic/apyrimidinic (AP) site-terminated flap. Acts as a genome stabilization factor that prevents flaps from equilibrating into structures that lead to duplications and deletions. Also possesses 5'-3' exonuclease activity on nicked or gapped double-stranded DNA, and exhibits RNase H activity. Also involved in replication and repair of rDNA and in repairing mitochondrial DNA. In Drosophila yakuba (Fruit fly), this protein is Flap endonuclease 1.